A 21-amino-acid chain; its full sequence is Putative NADH dehydrogenase subunit PS9 (21 aa).

This Pinus strobus (Eastern white pine) protein is Putative NADH dehydrogenase subunit PS9.